The following is a 572-amino-acid chain: 2-hydroxyacyl-CoA lyase (572 aa).

Alanine 2 is modified (N-acetylalanine). Glutamate 58 serves as a coordination point for thiamine diphosphate. The tract at residues 407–488 (TMDVGRSVLV…IIVFNNGGVY (82 aa)) is thiamine pyrophosphate binding. The Mg(2+) site is built by aspartate 457 and asparagine 484.

The protein belongs to the TPP enzyme family. Homotetramer. It depends on Mg(2+) as a cofactor. Requires thiamine diphosphate as cofactor.

It catalyses the reaction an (R)-2-hydroxy-long-chain-fatty acyl-CoA = a long-chain fatty aldehyde + formyl-CoA. The enzyme catalyses a 2-hydroxy-3-methyl fatty acyl-CoA = a 2-methyl-branched fatty aldehyde + formyl-CoA. Catalyzes a carbon-carbon cleavage reaction; cleaves a 2-hydroxy-3-methylacyl-CoA into formyl-CoA and a 2-methyl-branched fatty aldehyde. This is 2-hydroxyacyl-CoA lyase (HACL) from Arabidopsis thaliana (Mouse-ear cress).